Reading from the N-terminus, the 345-residue chain is Protein-glutamate methylesterase/protein-glutamine glutaminase 2 (345 aa).

The Response regulatory domain occupies 7–124 (KVLVVDDSPV…TADMLGYRSL (118 aa)). Asp-58 is modified (4-aspartylphosphate). The CheB-type methylesterase domain occupies 154–345 (STSQYQLIAI…LPQFLCDLLS (192 aa)). Active-site residues include Ser-166, His-192, and Asp-289.

It belongs to the CheB family. Post-translationally, phosphorylated by CheA. Phosphorylation of the N-terminal regulatory domain activates the methylesterase activity.

It localises to the cytoplasm. It carries out the reaction [protein]-L-glutamate 5-O-methyl ester + H2O = L-glutamyl-[protein] + methanol + H(+). The enzyme catalyses L-glutaminyl-[protein] + H2O = L-glutamyl-[protein] + NH4(+). Involved in chemotaxis. Part of a chemotaxis signal transduction system that modulates chemotaxis in response to various stimuli. Catalyzes the demethylation of specific methylglutamate residues introduced into the chemoreceptors (methyl-accepting chemotaxis proteins or MCP) by CheR. Also mediates the irreversible deamidation of specific glutamine residues to glutamic acid. In Vibrio vulnificus (strain YJ016), this protein is Protein-glutamate methylesterase/protein-glutamine glutaminase 2.